Consider the following 219-residue polypeptide: GTP cyclohydrolase 1 (219 aa).

Residues 1 to 37 (MDAVLKSLSVRLPDAADKRSDTGRPERVTERPTRQEA) form a disordered region. Residues 14 to 37 (DAADKRSDTGRPERVTERPTRQEA) show a composition bias toward basic and acidic residues. Residues Cys108, His111, and Cys179 each contribute to the Zn(2+) site.

This sequence belongs to the GTP cyclohydrolase I family. As to quaternary structure, homomer.

It carries out the reaction GTP + H2O = 7,8-dihydroneopterin 3'-triphosphate + formate + H(+). It participates in cofactor biosynthesis; 7,8-dihydroneopterin triphosphate biosynthesis; 7,8-dihydroneopterin triphosphate from GTP: step 1/1. The chain is GTP cyclohydrolase 1 from Methylobacterium sp. (strain 4-46).